A 278-amino-acid chain; its full sequence is 4-diphosphocytidyl-2-C-methyl-D-erythritol kinase (278 aa).

Residue lysine 9 is part of the active site. ATP is bound at residue 89-99; it reads PVASGIGGGSA. Residue aspartate 128 is part of the active site.

It belongs to the GHMP kinase family. IspE subfamily.

The catalysed reaction is 4-CDP-2-C-methyl-D-erythritol + ATP = 4-CDP-2-C-methyl-D-erythritol 2-phosphate + ADP + H(+). Its pathway is isoprenoid biosynthesis; isopentenyl diphosphate biosynthesis via DXP pathway; isopentenyl diphosphate from 1-deoxy-D-xylulose 5-phosphate: step 3/6. Functionally, catalyzes the phosphorylation of the position 2 hydroxy group of 4-diphosphocytidyl-2C-methyl-D-erythritol. The sequence is that of 4-diphosphocytidyl-2-C-methyl-D-erythritol kinase from Cereibacter sphaeroides (strain ATCC 17029 / ATH 2.4.9) (Rhodobacter sphaeroides).